Consider the following 195-residue polypeptide: Glucagon family neuropeptides (195 aa).

An N-terminal signal peptide occupies residues 1-20 (MAKSSRATLALLIYGILMRY). A propeptide spanning residues 21-82 (SQCTPIGMGF…YYPPERRAET (62 aa)) is cleaved from the precursor. A disordered region spans residues 113-132 (VGEEEEDEEDSEPLSKRHSD). Over residues 115 to 124 (EEEEDEEDSE) the composition is skewed to acidic residues. Position 167 is a lysine amide (Lys167). A propeptide spanning residues 171–195 (LVVPSVWTGIRDTVIITPEKRGKRY) is cleaved from the precursor.

Belongs to the glucagon family. Brain, testis, ovary and stomach. Not pancreas, pituitary, muscle and liver.

The protein resides in the secreted. In terms of biological role, primary role of GHRH is to release GH from the pituitary. Its function is as follows. PACAP plays pivotal roles as a neurotransmitter and/or a neuromodulator. In Clarias macrocephalus (Bighead catfish), this protein is Glucagon family neuropeptides.